We begin with the raw amino-acid sequence, 111 residues long: Cytochrome c oxidase subunit 6A1, mitochondrial (111 aa).

The N-terminal 26 residues, 1–26 (MASAVLSASRVSGLLGRALPRVGRPM), are a transit peptide targeting the mitochondrion. The Mitochondrial matrix segment spans residues 27-36 (SSGAHGEEGS). A helical transmembrane segment spans residues 37–61 (ARIWKALTYFVALPGVGVSMLNVFL). Over 62 to 111 (KSRHEEHERPEFVAYPHLRIRTKPFPWGDGNHTLFHNPHMNPLPTGYEDE) the chain is Mitochondrial intermembrane.

Belongs to the cytochrome c oxidase subunit 6A family. In terms of assembly, component of the cytochrome c oxidase (complex IV, CIV), a multisubunit enzyme composed of 14 subunits. The complex is composed of a catalytic core of 3 subunits MT-CO1, MT-CO2 and MT-CO3, encoded in the mitochondrial DNA, and 11 supernumerary subunits COX4I, COX5A, COX5B, COX6A, COX6B, COX6C, COX7A, COX7B, COX7C, COX8 and NDUFA4, which are encoded in the nuclear genome. The complex exists as a monomer or a dimer and forms supercomplexes (SCs) in the inner mitochondrial membrane with NADH-ubiquinone oxidoreductase (complex I, CI) and ubiquinol-cytochrome c oxidoreductase (cytochrome b-c1 complex, complex III, CIII), resulting in different assemblies (supercomplex SCI(1)III(2)IV(1) and megacomplex MCI(2)III(2)IV(2)).

It localises to the mitochondrion inner membrane. It functions in the pathway energy metabolism; oxidative phosphorylation. Functionally, component of the cytochrome c oxidase, the last enzyme in the mitochondrial electron transport chain which drives oxidative phosphorylation. The respiratory chain contains 3 multisubunit complexes succinate dehydrogenase (complex II, CII), ubiquinol-cytochrome c oxidoreductase (cytochrome b-c1 complex, complex III, CIII) and cytochrome c oxidase (complex IV, CIV), that cooperate to transfer electrons derived from NADH and succinate to molecular oxygen, creating an electrochemical gradient over the inner membrane that drives transmembrane transport and the ATP synthase. Cytochrome c oxidase is the component of the respiratory chain that catalyzes the reduction of oxygen to water. Electrons originating from reduced cytochrome c in the intermembrane space (IMS) are transferred via the dinuclear copper A center (CU(A)) of subunit 2 and heme A of subunit 1 to the active site in subunit 1, a binuclear center (BNC) formed by heme A3 and copper B (CU(B)). The BNC reduces molecular oxygen to 2 water molecules unsing 4 electrons from cytochrome c in the IMS and 4 protons from the mitochondrial matrix. This Rattus norvegicus (Rat) protein is Cytochrome c oxidase subunit 6A1, mitochondrial (Cox6a1).